A 677-amino-acid polypeptide reads, in one-letter code: Glutamine--fructose-6-phosphate aminotransferase [isomerizing] 1 (677 aa).

Cysteine 2 (nucleophile) is an active-site residue. The region spanning 2–269 (CGIFAYLNFH…DGEVVNLKDG (268 aa)) is the Glutamine amidotransferase type-2 domain. SIS domains lie at 353 to 492 (HLKT…DTIS) and 524 to 667 (LAQL…VDQP). Substrate is bound by residues 370–371 (TS), 415–417 (SQS), threonine 420, and histidine 571.

In terms of assembly, homotetramer, may also exist as homodimers. In terms of tissue distribution, highly expressed in flowers specifically in mature anthers, mature pollen grains and pollen tubes. Barely observed in roots, leaves and stems.

The catalysed reaction is D-fructose 6-phosphate + L-glutamine = D-glucosamine 6-phosphate + L-glutamate. It functions in the pathway nucleotide-sugar biosynthesis; UDP-N-acetyl-alpha-D-glucosamine biosynthesis; alpha-D-glucosamine 6-phosphate from D-fructose 6-phosphate: step 1/1. Its function is as follows. Controls the flux of glucose into the hexosamine biosynthetic pathway (HBP) leading to glucosamine (GlcN) content homeostasis. Involved in regulating the availability of precursors for N- and O-linked glycosylation of proteins. Required during pollen maturation and pollen tube formation by triggering polar deposition of pectin and callose in the pollen cell wall. Promotes tolerance to tunicamycin (Tm), an inhibitor of proteins N-glycosylation in endoplasmic reticulum (ER). This Arabidopsis thaliana (Mouse-ear cress) protein is Glutamine--fructose-6-phosphate aminotransferase [isomerizing] 1.